A 339-amino-acid polypeptide reads, in one-letter code: 4-hydroxythreonine-4-phosphate dehydrogenase (339 aa).

Positions 141 and 142 each coordinate substrate. A divalent metal cation contacts are provided by His-171, His-215, and His-270. Lys-278, Asn-287, and Arg-296 together coordinate substrate.

Belongs to the PdxA family. Homodimer. Zn(2+) serves as cofactor. Mg(2+) is required as a cofactor. Requires Co(2+) as cofactor.

It is found in the cytoplasm. It carries out the reaction 4-(phosphooxy)-L-threonine + NAD(+) = 3-amino-2-oxopropyl phosphate + CO2 + NADH. Its pathway is cofactor biosynthesis; pyridoxine 5'-phosphate biosynthesis; pyridoxine 5'-phosphate from D-erythrose 4-phosphate: step 4/5. Functionally, catalyzes the NAD(P)-dependent oxidation of 4-(phosphooxy)-L-threonine (HTP) into 2-amino-3-oxo-4-(phosphooxy)butyric acid which spontaneously decarboxylates to form 3-amino-2-oxopropyl phosphate (AHAP). The chain is 4-hydroxythreonine-4-phosphate dehydrogenase from Geobacter metallireducens (strain ATCC 53774 / DSM 7210 / GS-15).